A 974-amino-acid chain; its full sequence is Pentatricopeptide repeat-containing protein At5g61990, mitochondrial (974 aa).

The transit peptide at 1-31 (MMGSMLFRKRTLVTRANFLLFRSFSVNVEKL) directs the protein to the mitochondrion. 24 PPR repeats span residues 96–130 (KLDS…NWPV), 150–184 (DGVL…ELVP), 185–219 (RLSR…NVVF), 220–250 (DVKT…TEKE), 257–275 (NVDG…GLVP), 276–310 (LKYT…GVSL), 311–345 (DNHT…GINI), 346–380 (KPYM…GLIP), 381–415 (QAQA…NIVI), 416–450 (SPYT…GCRP), 451–485 (NVVI…GIAP), 486–520 (DIFC…GLKP), 521–555 (NAFT…GVLP), 556–590 (NKVL…GILG), 591–625 (DAKT…GIAP), 626–660 (DVFS…GLTP), 661–695 (NVII…GLHP), 696–730 (NAVT…GLVP), 731–761 (DSFV…NKKG), 765–799 (STAP…SFDR), 804–838 (NDVT…NLMP), 839–873 (TVIT…GIEP), 874–908 (DHIM…NAVD), and 914–948 (SIST…QYIP).

It belongs to the PPR family. P subfamily.

The protein localises to the mitochondrion. This chain is Pentatricopeptide repeat-containing protein At5g61990, mitochondrial, found in Arabidopsis thaliana (Mouse-ear cress).